A 325-amino-acid chain; its full sequence is Ribosomal RNA small subunit methyltransferase H (325 aa).

S-adenosyl-L-methionine contacts are provided by residues 38–40 (GGY), D55, F82, D103, and Q110. Disordered regions lie at residues 256–275 (SGGD…AARA) and 281–307 (PARK…RSAV).

The protein belongs to the methyltransferase superfamily. RsmH family.

It is found in the cytoplasm. It carries out the reaction cytidine(1402) in 16S rRNA + S-adenosyl-L-methionine = N(4)-methylcytidine(1402) in 16S rRNA + S-adenosyl-L-homocysteine + H(+). Its function is as follows. Specifically methylates the N4 position of cytidine in position 1402 (C1402) of 16S rRNA. This chain is Ribosomal RNA small subunit methyltransferase H, found in Sphingopyxis alaskensis (strain DSM 13593 / LMG 18877 / RB2256) (Sphingomonas alaskensis).